A 91-amino-acid polypeptide reads, in one-letter code: Large ribosomal subunit protein bL27 (91 aa).

The disordered stretch occupies residues 1-22 (MAHKKAGGSSRNGRDSAGRRLG).

Belongs to the bacterial ribosomal protein bL27 family.

In Methylocella silvestris (strain DSM 15510 / CIP 108128 / LMG 27833 / NCIMB 13906 / BL2), this protein is Large ribosomal subunit protein bL27.